Consider the following 339-residue polypeptide: DNA-directed RNA polymerase subunit alpha (339 aa).

The alpha N-terminal domain (alpha-NTD) stretch occupies residues 1–233 (MVREEITGST…DLFLPFIHTE (233 aa)). The alpha C-terminal domain (alpha-CTD) stretch occupies residues 266 to 339 (GIPLNCIFID…IDLPKNKFSL (74 aa)).

It belongs to the RNA polymerase alpha chain family. As to quaternary structure, in plastids the minimal PEP RNA polymerase catalytic core is composed of four subunits: alpha, beta, beta', and beta''. When a (nuclear-encoded) sigma factor is associated with the core the holoenzyme is formed, which can initiate transcription.

It is found in the plastid. It localises to the chloroplast. It carries out the reaction RNA(n) + a ribonucleoside 5'-triphosphate = RNA(n+1) + diphosphate. In terms of biological role, DNA-dependent RNA polymerase catalyzes the transcription of DNA into RNA using the four ribonucleoside triphosphates as substrates. The polypeptide is DNA-directed RNA polymerase subunit alpha (Saccharum hybrid (Sugarcane)).